Consider the following 331-residue polypeptide: Coiled-coil domain-containing protein 92 (331 aa).

Coiled coils occupy residues 18 to 44 and 76 to 152; these read MAAT…HAST and DGTS…EQRA. Positions 171–184 are enriched in low complexity; that stretch reads SSSGTSDASPSGSP. The tract at residues 171 to 212 is disordered; it reads SSSGTSDASPSGSPVLASYKPAPPKDKLPETPRRRMKKSLSA. Basic and acidic residues predominate over residues 193–203; that stretch reads PPKDKLPETPR. Phosphoserine is present on Ser209.

As to quaternary structure, interacts with CEP164. (Microbial infection) Interacts with ebolavirus protein NP; this interaction sequesters NP in the cytoplasm. Post-translationally, phosphorylated at Ser-209 by TTBK2.

The protein resides in the cytoplasm. The protein localises to the cytoskeleton. Its subcellular location is the microtubule organizing center. It localises to the centrosome. It is found in the centriole. In terms of biological role, interferon-stimulated protein that plays a role in innate immunity. Strongly inhibits ebolavirus transcription and replication. Forms a complex with viral RNA-bound nucleocapsid NP and thereby prevents the transport of NP to the cell surface. In Homo sapiens (Human), this protein is Coiled-coil domain-containing protein 92 (CCDC92).